The chain runs to 326 residues: uncharacterized protein (326 aa).

Solcar repeat units lie at residues 15–106, 114–215, and 234–322; these read EFLV…VRRV, ETHA…ATDF, and LKTW…SKAL. Helical transmembrane passes span 16 to 36, 83 to 103, 120 to 140, 191 to 211, 240 to 260, and 294 to 314; these read FLVK…SVVA, TATL…YEQV, FLSG…LELI, FSVT…AYDL, LLCG…FEVC, and FFVG…TSFF.

This sequence belongs to the mitochondrial carrier (TC 2.A.29) family.

Its subcellular location is the mitochondrion inner membrane. This is an uncharacterized protein from Schizosaccharomyces pombe (strain 972 / ATCC 24843) (Fission yeast).